A 500-amino-acid polypeptide reads, in one-letter code: Phosphatidylserine decarboxylase proenzyme 1, mitochondrial (500 aa).

A mitochondrion; not cleaved when targeted to the endoplasmic reticulum-targeting transit peptide spans 1 to 48; that stretch reads MSIMPVKNALAQGRTLLMGRMPAVKFSTRMQLRNRTAVLWNRKFSTRL. N-linked (GlcNAc...) asparagine glycosylation occurs at Asn34. Topologically, residues 45-79 are mitochondrial matrix; that stretch reads STRLFVQQRRSSGEIVDRAKAAAANSGRKQVSMKW. Positions 57–101 are enables targeting to the endoplasmic reticulum in addition to mitochondria; it reads GEIVDRAKAAAANSGRKQVSMKWVVLTSFTIVLGTILLVSRNDST. Residues 80–98 traverse the membrane as a helical segment; it reads VVLTSFTIVLGTILLVSRN. The Mitochondrial intermembrane segment spans residues 99-500; sequence DSTEEDATEG…LGIIGKNDLK (402 aa). Active-site charge relay system; for autoendoproteolytic cleavage activity residues include Asp210, His348, and Ser463. The active-site Schiff-base intermediate with substrate; via pyruvic acid; for decarboxylase activity is the Ser463. Ser463 bears the Pyruvic acid (Ser); by autocatalysis mark. The required for processing and stability stretch occupies residues 475–492; sequence FKFDVRVGDKVKMGQKLG.

The protein belongs to the phosphatidylserine decarboxylase family. PSD-B subfamily. Eukaryotic type I sub-subfamily. In terms of assembly, heterodimer of a large membrane-associated beta subunit and a small pyruvoyl-containing alpha subunit. The cofactor is pyruvate. In terms of processing, glycosylated at Asn-34 in the endoplasmic reticulum. The precursor is imported via the TOM complex into mitochondria, where the N-terminal presequence is cleaved by the matrix-located proteases MPP (MAS1-MAS2) and OCT1. Post-translationally, is synthesized initially as an inactive proenzyme. Formation of the active enzyme involves a self-maturation process in which the active site pyruvoyl group is generated from an internal serine residue via an autocatalytic post-translational modification. Two non-identical subunits are generated from the proenzyme in this reaction, and the pyruvate is formed at the N-terminus of the alpha chain, which is derived from the carboxyl end of the proenzyme. The autoendoproteolytic cleavage occurs by a canonical serine protease mechanism, in which the side chain hydroxyl group of the serine supplies its oxygen atom to form the C-terminus of the beta chain, while the remainder of the serine residue undergoes an oxidative deamination to produce ammonia and the pyruvoyl prosthetic group on the alpha chain. During this reaction, the Ser that is part of the protease active site of the proenzyme becomes the pyruvoyl prosthetic group, which constitutes an essential element of the active site of the mature decarboxylase.

It is found in the mitochondrion inner membrane. It localises to the lipid droplet. The protein localises to the endoplasmic reticulum membrane. It catalyses the reaction a 1,2-diacyl-sn-glycero-3-phospho-L-serine + H(+) = a 1,2-diacyl-sn-glycero-3-phosphoethanolamine + CO2. The protein operates within phospholipid metabolism; phosphatidylethanolamine biosynthesis; phosphatidylethanolamine from CDP-diacylglycerol: step 2/2. Catalyzes the formation of phosphatidylethanolamine (PtdEtn) from phosphatidylserine (PtdSer). Plays a central role in phospholipid metabolism and in the interorganelle trafficking of phosphatidylserine. Phosphatidylethanolamine formed in the mitochondria is exported to other membranes to fullfill their requirements for PtdEtn. Required for normal mitochondrial morphology and proper mitochondrial fusion during yeast mating. Involved in lipid droplet biogenesis at the endoplasmic reticulum membrane. Required for induction of mitophagy during nitrogen starvation. Appears to play a specific role in supporting respiratory complex III activity. This Saccharomyces cerevisiae (strain ATCC 204508 / S288c) (Baker's yeast) protein is Phosphatidylserine decarboxylase proenzyme 1, mitochondrial.